We begin with the raw amino-acid sequence, 83 residues long: Conotoxin Pu6.1 (83 aa).

An N-terminal signal peptide occupies residues 1–19 (MKLVLAIVLILMLVSLSTG). The propeptide occupies 20–42 (AEESGQEISMVGPPLYIWDPIPP). Cystine bridges form between C43-C57, C50-C62, and C56-C78.

The protein belongs to the conotoxin I3 superfamily. In terms of tissue distribution, expressed by the venom duct.

The protein resides in the secreted. The chain is Conotoxin Pu6.1 from Conus pulicarius (Flea-bitten cone).